The following is a 133-amino-acid chain: Putative esterase STK_17900 (133 aa).

Belongs to the thioesterase PaaI family.

This Sulfurisphaera tokodaii (strain DSM 16993 / JCM 10545 / NBRC 100140 / 7) (Sulfolobus tokodaii) protein is Putative esterase STK_17900.